Here is a 780-residue protein sequence, read N- to C-terminus: APC membrane recruitment protein 3 (780 aa).

A compositionally biased stretch (basic and acidic residues) spans 20-32; that stretch reads KLIDSPAKEDPDK. Disordered regions lie at residues 20–59, 341–407, 547–569, 582–617, 635–659, 706–729, and 749–780; these read KLIDSPAKEDPDKWPLSLGEQQRAYGEKSSQTSPCSQGYG, ELPL…FPRD, KGREDQATTCFPPSRQEPWAHSG, GEPARGSKTPSKDDSLEEGTQDFSEGQSSSEATMTS, KELGTPGNLRYSQGPLRPGHRGSAL, KNPISSKPNEAAGCGLSSSASPQD, and LGPQACSSVDSQPQQLCPRAPEQVPHRGSVGS. Polar residues predominate over residues 354–376; it reads SKASSIDTGTPKSEQPESVSTSD. The segment covering 602-617 has biased composition (polar residues); it reads QDFSEGQSSSEATMTS. Polar residues predominate over residues 753–763; it reads ACSSVDSQPQQ.

It belongs to the Amer family.

The protein resides in the cell membrane. Regulator of the canonical Wnt signaling pathway. Acts by specifically binding phosphatidylinositol 4,5-bisphosphate (PtdIns(4,5)P2), translocating to the cell membrane. This Mus musculus (Mouse) protein is APC membrane recruitment protein 3 (Amer3).